The sequence spans 479 residues: Cardiolipin synthase A (479 aa).

Transmembrane regions (helical) follow at residues 8 to 28 (IFGYLIALLHFLGLIAAIHAV) and 38 to 58 (IAWALSLLFMPYLTLIPYLVF). 2 consecutive PLD phosphodiesterase domains span residues 218–245 (VNFRNHRKIVVVDGMLGFVGGHNVGDEY) and 392–419 (QPGFLHQKVVLIDNEISAIGSANLDNRS). Active-site residues include H223, K225, D230, H397, K399, and D404.

Belongs to the phospholipase D family. Cardiolipin synthase subfamily. ClsA sub-subfamily.

The protein resides in the cell inner membrane. The catalysed reaction is 2 a 1,2-diacyl-sn-glycero-3-phospho-(1'-sn-glycerol) = a cardiolipin + glycerol. In terms of biological role, catalyzes the reversible phosphatidyl group transfer from one phosphatidylglycerol molecule to another to form cardiolipin (CL) (diphosphatidylglycerol) and glycerol. The chain is Cardiolipin synthase A from Pseudomonas fluorescens (strain ATCC BAA-477 / NRRL B-23932 / Pf-5).